We begin with the raw amino-acid sequence, 1334 residues long: Stress response protein NST1 (1334 aa).

Basic residues predominate over residues 1–14 (MPSHSKNKKRKSKS). Disordered stretches follow at residues 1–82 (MPSH…SSNN), 212–242 (QMISPPASPEMDSNNVDEAREPNSGSSNESL), 530–565 (IISPRNDDGNDTEEDIDYYDDEDDVSSENIHHRNDL), 712–849 (AEES…AEQK), and 977–996 (AAINDPTTPQTTLPYGNSSV). Low complexity predominate over residues 15-25 (KGGSTVKKSGG). Over residues 538 to 555 (GNDTEEDIDYYDDEDDVS) the composition is skewed to acidic residues. The stretch at 694-876 (YHAKQAENNR…LEEEEKRLKS (183 aa)) forms a coiled coil. Residues 981-996 (DPTTPQTTLPYGNSSV) show a composition bias toward polar residues.

This sequence belongs to the NST1 family.

It is found in the cytoplasm. May act as a negative regulator of salt tolerance. The polypeptide is Stress response protein NST1 (NST1) (Vanderwaltozyma polyspora (strain ATCC 22028 / DSM 70294 / BCRC 21397 / CBS 2163 / NBRC 10782 / NRRL Y-8283 / UCD 57-17) (Kluyveromyces polysporus)).